Reading from the N-terminus, the 214-residue chain is A-type ATP synthase subunit D (214 aa).

This sequence belongs to the V-ATPase D subunit family. In terms of assembly, has multiple subunits with at least A(3), B(3), C, D, E, F, H, I and proteolipid K(x).

The protein localises to the cell membrane. Component of the A-type ATP synthase that produces ATP from ADP in the presence of a proton gradient across the membrane. In Thermococcus kodakarensis (strain ATCC BAA-918 / JCM 12380 / KOD1) (Pyrococcus kodakaraensis (strain KOD1)), this protein is A-type ATP synthase subunit D.